The sequence spans 145 residues: 3-hydroxyacyl-[acyl-carrier-protein] dehydratase FabZ (145 aa).

The active site involves H49.

Belongs to the thioester dehydratase family. FabZ subfamily.

The protein localises to the cytoplasm. It carries out the reaction a (3R)-hydroxyacyl-[ACP] = a (2E)-enoyl-[ACP] + H2O. Its function is as follows. Involved in unsaturated fatty acids biosynthesis. Catalyzes the dehydration of short chain beta-hydroxyacyl-ACPs and long chain saturated and unsaturated beta-hydroxyacyl-ACPs. The protein is 3-hydroxyacyl-[acyl-carrier-protein] dehydratase FabZ of Rickettsia bellii (strain RML369-C).